The sequence spans 199 residues: Ribosome maturation factor RimM (199 aa).

One can recognise a PRC barrel domain in the interval 93-169 (DDEYYHADLI…IELPDEIDGE (77 aa)). The disordered stretch occupies residues 164-199 (DEIDGEDRASADESASAEDDAAAPNSARHPRESGDP).

The protein belongs to the RimM family. Binds ribosomal protein uS19.

The protein resides in the cytoplasm. An accessory protein needed during the final step in the assembly of 30S ribosomal subunit, possibly for assembly of the head region. Essential for efficient processing of 16S rRNA. May be needed both before and after RbfA during the maturation of 16S rRNA. It has affinity for free ribosomal 30S subunits but not for 70S ribosomes. The protein is Ribosome maturation factor RimM of Bradyrhizobium sp. (strain ORS 278).